Reading from the N-terminus, the 424-residue chain is Steryl acetyl hydrolase 1 (424 aa).

A2 bears the N-acetylalanine mark. The Cytoplasmic portion of the chain corresponds to 2 to 45 (AANSGLDSKVEYYRLQENEIISAVSSEDADQNDAGFRLSTIHLH). A helical; Signal-anchor for type II membrane protein membrane pass occupies residues 46–66 (LFHGLKFAALLFTVVPVFIIL). Over 67 to 424 (DSMKIIFQRK…IARILEFMQS (358 aa)) the chain is Lumenal. Residue N85 is glycosylated (N-linked (GlcNAc...) asparagine). An Involved in the stabilization of the negatively charged intermediate by the formation of the oxyanion hole motif is present at residues 176-178 (HGG). S250 is an active-site residue. The N-linked (GlcNAc...) asparagine glycan is linked to N283. The active site involves H395. An N-linked (GlcNAc...) asparagine glycan is attached at N401.

It belongs to the 'GDXG' lipolytic enzyme family.

Its subcellular location is the endoplasmic reticulum membrane. Functionally, required for the deacetylation of acetylated sterols. Involved in the resistance to eugenol and pregnenolone toxicity. This is Steryl acetyl hydrolase 1 (SAY1) from Saccharomyces cerevisiae (strain ATCC 204508 / S288c) (Baker's yeast).